Reading from the N-terminus, the 98-residue chain is snRNA-activating protein complex subunit 5 (98 aa).

The interval 75 to 98 (ALELSTRSHVQEEEEEEEEEEEDS) is disordered. Residues 86–98 (EEEEEEEEEEEDS) show a composition bias toward acidic residues.

In terms of assembly, part of the SNAPc complex composed of 5 subunits: SNAPC1, SNAPC2, SNAPC3, SNAPC4 and SNAPC5. SNAPC5 interacts with SNAPC4.

Its subcellular location is the nucleus. Its function is as follows. Part of the SNAPc complex required for the transcription of both RNA polymerase II and III small-nuclear RNA genes. Binds to the proximal sequence element (PSE), a non-TATA-box basal promoter element common to these 2 types of genes. Recruits TBP and BRF2 to the U6 snRNA TATA box. In Bos taurus (Bovine), this protein is snRNA-activating protein complex subunit 5 (SNAPC5).